The sequence spans 275 residues: Phosphonoacetaldehyde hydrolase (275 aa).

The Nucleophile role is filled by Asp-15. Positions 15 and 17 each coordinate Mg(2+). The active-site Schiff-base intermediate with substrate is Lys-56. Asp-189 contributes to the Mg(2+) binding site.

The protein belongs to the HAD-like hydrolase superfamily. PhnX family. In terms of assembly, homodimer. It depends on Mg(2+) as a cofactor.

The catalysed reaction is phosphonoacetaldehyde + H2O = acetaldehyde + phosphate + H(+). Functionally, involved in phosphonate degradation. The sequence is that of Phosphonoacetaldehyde hydrolase from Pseudomonas entomophila (strain L48).